The sequence spans 232 residues: Ribosomal RNA small subunit methyltransferase G (232 aa).

S-adenosyl-L-methionine-binding positions include Gly-93, Leu-98, 144–145, and Arg-163; that span reads VE.

This sequence belongs to the methyltransferase superfamily. RNA methyltransferase RsmG family.

It is found in the cytoplasm. It catalyses the reaction guanosine(527) in 16S rRNA + S-adenosyl-L-methionine = N(7)-methylguanosine(527) in 16S rRNA + S-adenosyl-L-homocysteine. Specifically methylates the N7 position of guanine in position 527 of 16S rRNA. This Burkholderia pseudomallei (strain 668) protein is Ribosomal RNA small subunit methyltransferase G.